The following is a 128-amino-acid chain: Small ribosomal subunit protein bS6 (128 aa).

Belongs to the bacterial ribosomal protein bS6 family.

Its function is as follows. Binds together with bS18 to 16S ribosomal RNA. This chain is Small ribosomal subunit protein bS6, found in Nitratiruptor sp. (strain SB155-2).